The sequence spans 267 residues: Chaperone protein MyfB (267 aa).

An N-terminal signal peptide occupies residues 1–34 (MKYKFSHNFISYNLFLFVFMSLILLPYSHASSMG). Cysteine 127 and cysteine 164 are joined by a disulfide.

It belongs to the periplasmic pilus chaperone family.

It is found in the periplasm. Required for the biogenesis of the MyfA fimbria. The sequence is that of Chaperone protein MyfB (myfB) from Yersinia enterocolitica.